Consider the following 445-residue polypeptide: Glucose-6-phosphate isomerase 2 (445 aa).

The active-site Proton donor is the glutamate 285. Catalysis depends on residues histidine 306 and lysine 420.

The protein belongs to the GPI family. Homodimer.

It is found in the cytoplasm. The catalysed reaction is alpha-D-glucose 6-phosphate = beta-D-fructose 6-phosphate. Its pathway is carbohydrate biosynthesis; gluconeogenesis. It participates in carbohydrate degradation; glycolysis; D-glyceraldehyde 3-phosphate and glycerone phosphate from D-glucose: step 2/4. Functionally, catalyzes the reversible isomerization of glucose-6-phosphate to fructose-6-phosphate. This Geobacillus stearothermophilus (Bacillus stearothermophilus) protein is Glucose-6-phosphate isomerase 2.